Here is a 224-residue protein sequence, read N- to C-terminus: Putative O-methyltransferase MT1258 (224 aa).

Basic and acidic residues predominate over residues 1-10; it reads MDGTPGHDDM. Positions 1–21 are disordered; sequence MDGTPGHDDMPGQPAPSRGES. Residues V51, E73, 75-76, S81, D99, and I100 each bind S-adenosyl-L-methionine; that span reads GT. D147 serves as a coordination point for substrate. S-adenosyl-L-methionine is bound at residue D149.

This sequence belongs to the class I-like SAM-binding methyltransferase superfamily. Cation-dependent O-methyltransferase family.

This is Putative O-methyltransferase MT1258 from Mycobacterium tuberculosis (strain CDC 1551 / Oshkosh).